Consider the following 142-residue polypeptide: Large ribosomal subunit protein uL11 (142 aa).

Belongs to the universal ribosomal protein uL11 family. Part of the ribosomal stalk of the 50S ribosomal subunit. Interacts with L10 and the large rRNA to form the base of the stalk. L10 forms an elongated spine to which L12 dimers bind in a sequential fashion forming a multimeric L10(L12)X complex. One or more lysine residues are methylated.

In terms of biological role, forms part of the ribosomal stalk which helps the ribosome interact with GTP-bound translation factors. In Aeromonas hydrophila subsp. hydrophila (strain ATCC 7966 / DSM 30187 / BCRC 13018 / CCUG 14551 / JCM 1027 / KCTC 2358 / NCIMB 9240 / NCTC 8049), this protein is Large ribosomal subunit protein uL11.